The chain runs to 299 residues: ATP phosphoribosyltransferase (299 aa).

The protein belongs to the ATP phosphoribosyltransferase family. Long subfamily. As to quaternary structure, equilibrium between an active dimeric form, an inactive hexameric form and higher aggregates. Interconversion between the various forms is largely reversible and is influenced by the natural substrates and inhibitors of the enzyme. It depends on Mg(2+) as a cofactor.

The protein resides in the cytoplasm. It catalyses the reaction 1-(5-phospho-beta-D-ribosyl)-ATP + diphosphate = 5-phospho-alpha-D-ribose 1-diphosphate + ATP. Its pathway is amino-acid biosynthesis; L-histidine biosynthesis; L-histidine from 5-phospho-alpha-D-ribose 1-diphosphate: step 1/9. Feedback inhibited by histidine. Catalyzes the condensation of ATP and 5-phosphoribose 1-diphosphate to form N'-(5'-phosphoribosyl)-ATP (PR-ATP). Has a crucial role in the pathway because the rate of histidine biosynthesis seems to be controlled primarily by regulation of HisG enzymatic activity. This is ATP phosphoribosyltransferase from Blochmanniella floridana.